Reading from the N-terminus, the 316-residue chain is ATP synthase gamma chain (316 aa).

Belongs to the ATPase gamma chain family. As to quaternary structure, F-type ATPases have 2 components, CF(1) - the catalytic core - and CF(0) - the membrane proton channel. CF(1) has five subunits: alpha(3), beta(3), gamma(1), delta(1), epsilon(1). CF(0) has three main subunits: a, b and c.

It localises to the cellular thylakoid membrane. Produces ATP from ADP in the presence of a proton gradient across the membrane. The gamma chain is believed to be important in regulating ATPase activity and the flow of protons through the CF(0) complex. The chain is ATP synthase gamma chain from Prochlorococcus marinus (strain MIT 9301).